Reading from the N-terminus, the 129-residue chain is N16.2 matrix protein (129 aa).

Positions 1-23 (MKCTLRWTITALVLLGICHLARP) are cleaved as a signal peptide. 5 tandem repeats follow at residues 91 to 92 (NG), 93 to 94 (NG), 95 to 96 (DG), 97 to 98 (NG), and 99 to 100 (NG). A 5 X 2 AA tandem repeats of N-G region spans residues 91-100 (NGNGDGNGNG).

This sequence belongs to the N16 matrix protein family. Heterooligomer; disulfide-linked. Pif97, Pif80, N16 and other proteins form a complex. As to expression, component of conchiolin, the organic matrix of nacre. Expressed at extremely high levels in the dorsal region of the mantle, which region may be responsible for the nacreous layer formation, but only in trace amounts at the mantle edge, which region may be responsible for the prismatic layer formation.

Its subcellular location is the secreted. It is found in the extracellular space. The protein localises to the extracellular matrix. Its function is as follows. May be specifically involved in the formation of the nacreous layer. In Pinctada fucata (Akoya pearl oyster), this protein is N16.2 matrix protein.